The sequence spans 224 residues: ATP phosphoribosyltransferase (224 aa).

Belongs to the ATP phosphoribosyltransferase family. Short subfamily. In terms of assembly, heteromultimer composed of HisG and HisZ subunits.

The protein localises to the cytoplasm. It carries out the reaction 1-(5-phospho-beta-D-ribosyl)-ATP + diphosphate = 5-phospho-alpha-D-ribose 1-diphosphate + ATP. The protein operates within amino-acid biosynthesis; L-histidine biosynthesis; L-histidine from 5-phospho-alpha-D-ribose 1-diphosphate: step 1/9. In terms of biological role, catalyzes the condensation of ATP and 5-phosphoribose 1-diphosphate to form N'-(5'-phosphoribosyl)-ATP (PR-ATP). Has a crucial role in the pathway because the rate of histidine biosynthesis seems to be controlled primarily by regulation of HisG enzymatic activity. The protein is ATP phosphoribosyltransferase of Cupriavidus metallidurans (strain ATCC 43123 / DSM 2839 / NBRC 102507 / CH34) (Ralstonia metallidurans).